We begin with the raw amino-acid sequence, 147 residues long: Large ribosomal subunit protein bL9 (147 aa).

This sequence belongs to the bacterial ribosomal protein bL9 family.

Binds to the 23S rRNA. This chain is Large ribosomal subunit protein bL9, found in Clostridium botulinum (strain Alaska E43 / Type E3).